Consider the following 628-residue polypeptide: Propionate--CoA ligase (628 aa).

This sequence belongs to the ATP-dependent AMP-binding enzyme family.

It carries out the reaction propanoate + ATP + CoA = propanoyl-CoA + AMP + diphosphate. The protein operates within organic acid metabolism; propanoate degradation. Its function is as follows. Catalyzes the synthesis of propionyl-CoA from propionate and CoA. Also converts acetate to acetyl-CoA but with a lower specific activity. The protein is Propionate--CoA ligase (prpE) of Salmonella typhimurium (strain LT2 / SGSC1412 / ATCC 700720).